The sequence spans 480 residues: UDP-N-acetylmuramate--L-alanine ligase (480 aa).

127 to 133 (GTHGKTT) lines the ATP pocket.

This sequence belongs to the MurCDEF family.

The protein resides in the cytoplasm. It catalyses the reaction UDP-N-acetyl-alpha-D-muramate + L-alanine + ATP = UDP-N-acetyl-alpha-D-muramoyl-L-alanine + ADP + phosphate + H(+). The protein operates within cell wall biogenesis; peptidoglycan biosynthesis. Functionally, cell wall formation. The chain is UDP-N-acetylmuramate--L-alanine ligase from Blochmanniella floridana.